The chain runs to 515 residues: Gamma aminobutyrate transaminase 1, mitochondrial (515 aa).

Residues 1-57 constitute a mitochondrion transit peptide; the sequence is MAKISRLFGSTVKAAITAQAGFHGKRIPAVSSLQEHIVKSTPARYNSTQACLENDIS. Position 172–173 (172–173) interacts with pyridoxal 5'-phosphate; sequence GS. Tyr205 contributes to the substrate binding site. Asp312 serves as a coordination point for pyridoxal 5'-phosphate. Position 341 (Lys341) interacts with substrate. Lys341 is subject to N6-(pyridoxal phosphate)lysine.

It belongs to the class-III pyridoxal-phosphate-dependent aminotransferase family. Expressed in leaves, roots, stems, flowers and fruits.

The protein localises to the mitochondrion. The catalysed reaction is 4-aminobutanoate + pyruvate = succinate semialdehyde + L-alanine. The enzyme catalyses 4-aminobutanoate + glyoxylate = succinate semialdehyde + glycine. Its function is as follows. Transaminase that degrades gamma-amino butyric acid (GABA) and uses pyruvate or glyoxylate as amino-group acceptor. Cannot use beta-alanine, ornithine, acetylornithine, serine, glycine, asparagine, glutamine, glutamate, valine, leucine, isoleucine, methionine, phenylalanine, histidine, lysine, arginine, aspartate, threonine, tyrosine, tryptophan, proline, or cysteine as amino donors. Acts predominantly in vegetative tissues. This chain is Gamma aminobutyrate transaminase 1, mitochondrial (GABA-TP1), found in Solanum lycopersicum (Tomato).